Consider the following 1820-residue polypeptide: Cation channel sperm-associated targeting subunit tau (1820 aa).

Residues 87-222 (DSEELEITQE…QKGCFIEEVQ (136 aa)) form the C2 domain. 4 disordered regions span residues 360–383 (SEETNIDEASENTKSNHPEEELEN), 403–443 (LLDN…TEVH), 695–722 (EVSMNSEAREKSSSPLLSIHDKSSSSME), and 838–857 (SSTKKKHLISEVPNSKSGSS). The segment covering 415–443 (PTLNQSDQDNSTADASKNDESTPSPTEVH) has biased composition (polar residues).

In terms of assembly, component of the CatSper complex or CatSpermasome composed of the core pore-forming members CATSPER1, CATSPER2, CATSPER3 and CATSPER4 as well as auxiliary members CATSPERB, CATSPERG, CATSPERD, CATSPERE, CATSPERZ, C2CD6/CATSPERT, TMEM249, TMEM262 and EFCAB9. HSPA1 may be an additional auxiliary complex member. The core complex members CATSPER1, CATSPER2, CATSPER3 and CATSPER4 form a heterotetrameric channel. The auxiliary CATSPERB, CATSPERG, CATSPERD and CATSPERE subunits form a pavilion-like structure over the pore which stabilizes the complex through interactions with CATSPER4, CATSPER3, CATSPER1 and CATSPER2 respectively. SLCO6C1 interacts with CATSPERE and TMEM262/CATSPERH interacts with CATSPERB, further stabilizing the complex. C2CD6/CATSPERT interacts at least with CATSPERD and is required for targeting the CatSper complex in the flagellar membrane. In terms of tissue distribution, expressed in testis (at protein level).

Its subcellular location is the cell projection. The protein localises to the cilium. It localises to the flagellum membrane. In terms of biological role, auxiliary component of the CatSper complex, a complex involved in sperm cell hyperactivation. Sperm cell hyperactivation is needed for sperm motility which is essential late in the preparation of sperm for fertilization. Required for CatSper complex targeting and trafficking into the quadrilinear nanodomains. Targets the preassembled CatSper complexes to elongating flagella, where it links the channel-carrying vesicles and motor proteins. This Homo sapiens (Human) protein is Cation channel sperm-associated targeting subunit tau.